The chain runs to 224 residues: Ribonuclease HII (224 aa).

The region spanning 1–219 (MMIAGIDEAG…VENIREELKK (219 aa)) is the RNase H type-2 domain. Positions 7, 8, and 105 each coordinate a divalent metal cation.

This sequence belongs to the RNase HII family. The cofactor is Mn(2+). Mg(2+) is required as a cofactor.

It localises to the cytoplasm. The enzyme catalyses Endonucleolytic cleavage to 5'-phosphomonoester.. Functionally, endonuclease that specifically degrades the RNA of RNA-DNA hybrids. The polypeptide is Ribonuclease HII (Methanosarcina barkeri (strain Fusaro / DSM 804)).